The following is a 511-amino-acid chain: MATSVQTGKAKQLTLLGFFAITASMVMAVYEYPTFATSGFSLVFFLLLGGILWFIPVGLCAAEMATVDGWEEGGVFAWVSNTLGPRWGFAAISFGYLQIAIGFIPMLYFVLGALSYILKWPALNEDPITKTIAALIILWALALTQFGGTKYTARIAKVGFFAGILLPAFILIALAAIYLHSGAPVAIEMDSKTFFPDFSKVGTLVVFVAFILSYMGVEASATHVNEMSNPGRDYPLAMLLLMVAAICLSSVGGLSIAMVIPGNEINLSAGVMQTFTVLMSHVAPEIEWTVRVISALLLLGVLAEIASWIVGPSRGMYVTAQKNLLPAAFAKMNKNGVPVTLVISQLVITSIALIILTNTGGGNNMSFLIALALTVVIYLCAYFMLFIGYIVLVLKHPDLKRTFNIPGGKGVKLVVAIVGLLTSIMAFIVSFLPPDNIQGDSTDMYVELLVVSFLVVLALPFILYAVHDRKGKANTGVTLEPINSQNAPKGHFFLHPRARSPHYIVMNDKKH.

The Cytoplasmic portion of the chain corresponds to 1–13; the sequence is MATSVQTGKAKQL. The chain crosses the membrane as a helical span at residues 14-36; it reads TLLGFFAITASMVMAVYEYPTFA. The Periplasmic segment spans residues 37-40; that stretch reads TSGF. The chain crosses the membrane as a helical span at residues 41-64; that stretch reads SLVFFLLLGGILWFIPVGLCAAEM. Residues 65–85 are Cytoplasmic-facing; the sequence is ATVDGWEEGGVFAWVSNTLGP. Residues 86-112 traverse the membrane as a helical segment; that stretch reads RWGFAAISFGYLQIAIGFIPMLYFVLG. At 113–126 the chain is on the periplasmic side; sequence ALSYILKWPALNED. Residues 127 to 147 traverse the membrane as a helical segment; that stretch reads PITKTIAALIILWALALTQFG. The Cytoplasmic portion of the chain corresponds to 148 to 151; the sequence is GTKY. The helical transmembrane segment at 152–180 threads the bilayer; the sequence is TARIAKVGFFAGILLPAFILIALAAIYLH. At 181–201 the chain is on the periplasmic side; it reads SGAPVAIEMDSKTFFPDFSKV. The chain crosses the membrane as a helical span at residues 202–225; that stretch reads GTLVVFVAFILSYMGVEASATHVN. Over 226-229 the chain is Cytoplasmic; sequence EMSN. Residues 230–259 form a helical membrane-spanning segment; it reads PGRDYPLAMLLLMVAAICLSSVGGLSIAMV. Residues 260–288 lie on the Periplasmic side of the membrane; sequence IPGNEINLSAGVMQTFTVLMSHVAPEIEW. The helical transmembrane segment at 289 to 322 threads the bilayer; the sequence is TVRVISALLLLGVLAEIASWIVGPSRGMYVTAQK. Residues 323–337 are Cytoplasmic-facing; the sequence is NLLPAAFAKMNKNGV. The helical transmembrane segment at 338–359 threads the bilayer; it reads PVTLVISQLVITSIALIILTNT. Residues 360 to 362 lie on the Periplasmic side of the membrane; that stretch reads GGG. A helical membrane pass occupies residues 363-396; sequence NNMSFLIALALTVVIYLCAYFMLFIGYIVLVLKH. Topologically, residues 397–409 are cytoplasmic; the sequence is PDLKRTFNIPGGK. Residues 410–430 form a helical membrane-spanning segment; that stretch reads GVKLVVAIVGLLTSIMAFIVS. Topologically, residues 431 to 443 are periplasmic; it reads FLPPDNIQGDSTD. Residues 444–467 form a helical membrane-spanning segment; sequence MYVELLVVSFLVVLALPFILYAVH. Residues 468 to 511 are Cytoplasmic-facing; the sequence is DRKGKANTGVTLEPINSQNAPKGHFFLHPRARSPHYIVMNDKKH.

This sequence belongs to the amino acid-polyamine-organocation (APC) superfamily. Glutamate:GABA antiporter (GGA) (TC 2.A.3.7) family. As to quaternary structure, monomer.

Its subcellular location is the cell inner membrane. It catalyses the reaction 4-aminobutanoate(in) + L-glutamate(out) = 4-aminobutanoate(out) + L-glutamate(in). With respect to regulation, shows pH-dependent activity. The Glu/GABA transport activity is robust at pH 4.5 and rapidly decreases with increasing pH, with no detectable activity at pH 6.5 or above. The Glu analog L-trans-pyrrolidine-2,4-dicarboxylic acid (L-PDC) blocks the uptake of glutamate by selective inhibition. Involved in glutaminase-dependent acid resistance. Exchanges extracellular glutamate (Glu) for intracellular gamma-aminobutyric acid (GABA) under acidic conditions. The protonation states of substrates are crucial for transport. Selectively transports Glu with no net charge and GABA with a positive charge. Also efficiently transports glutamine and, to a smaller extent, methionine and leucine. When the extracellular pH drops below 2.5, can import L-glutamine and export either glutamate or GABA. The ability to survive the extremely acidic conditions of the stomach is essential for successful colonization of the host by commensal and pathogenic bacteria. The sequence is that of Glutamate/gamma-aminobutyrate antiporter from Escherichia coli (strain K12).